We begin with the raw amino-acid sequence, 168 residues long: DNA damage-inducible transcript 3 protein (168 aa).

The interval Phe-10 to Leu-18 is interaction with TRIB3. Residues Phe-10–Gln-26 form an N-terminal region. A phosphoserine; by CK2 mark is found at Ser-14, Ser-15, Ser-30, and Ser-31. The tract at residues Ser-31–Lys-141 is disordered. Residues Ser-76–Ala-90 are compositionally biased toward low complexity. Ser-78 and Ser-81 each carry phosphoserine; by MAPK14. Residues Gln-98–Arg-161 enclose the bZIP domain. The interval Arg-100–Lys-129 is basic motif. Positions Arg-118–Lys-141 are enriched in basic and acidic residues. A leucine-zipper region spans residues Leu-133–Leu-147.

This sequence belongs to the bZIP family. Heterodimer. Interacts with TCF7L2/TCF4, EP300/P300, HDAC1, HDAC5 and HDAC6. Interacts with TRIB3 which blocks its association with EP300/P300. Interacts with FOXO3, CEBPB and ATF4. Post-translationally, ubiquitinated, leading to its degradation by the proteasome. In terms of processing, phosphorylation at serine residues by MAPK14 enhances its transcriptional activation activity while phosphorylation at serine residues by CK2 inhibits its transcriptional activation activity.

It is found in the cytoplasm. It localises to the nucleus. In terms of biological role, multifunctional transcription factor in ER stress response. Plays an essential role in the response to a wide variety of cell stresses and induces cell cycle arrest and apoptosis in response to ER stress. Plays a dual role both as an inhibitor of CCAAT/enhancer-binding protein (C/EBP) function and as an activator of other genes. Acts as a dominant-negative regulator of C/EBP-induced transcription: dimerizes with members of the C/EBP family, impairs their association with C/EBP binding sites in the promoter regions, and inhibits the expression of C/EBP regulated genes. Positively regulates the transcription of TRIB3, IL6, IL8, IL23, TNFRSF10B/DR5, PPP1R15A/GADD34, BBC3/PUMA, BCL2L11/BIM and ERO1L. Negatively regulates; expression of BCL2 and MYOD1, ATF4-dependent transcriptional activation of asparagine synthetase (ASNS), CEBPA-dependent transcriptional activation of hepcidin (HAMP) and CEBPB-mediated expression of peroxisome proliferator-activated receptor gamma (PPARG). Inhibits the canonical Wnt signaling pathway by binding to TCF7L2/TCF4, impairing its DNA-binding properties and repressing its transcriptional activity. Plays a regulatory role in the inflammatory response through the induction of caspase-11 (CASP4/CASP11) which induces the activation of caspase-1 (CASP1) and both these caspases increase the activation of pro-IL1B to mature IL1B which is involved in the inflammatory response. This is DNA damage-inducible transcript 3 protein (DDIT3) from Bos taurus (Bovine).